Here is a 341-residue protein sequence, read N- to C-terminus: Methionine import ATP-binding protein MetN 2 (341 aa).

The 240-residue stretch at 2-241 folds into the ABC transporter domain; sequence IKLNQIVKRY…PQHEVTKRFV (240 aa). Residue 38-45 participates in ATP binding; it reads GFSGAGKS.

Belongs to the ABC transporter superfamily. Methionine importer (TC 3.A.1.24) family. The complex is composed of two ATP-binding proteins (MetN), two transmembrane proteins (MetI) and a solute-binding protein (MetQ).

It is found in the cell membrane. The catalysed reaction is L-methionine(out) + ATP + H2O = L-methionine(in) + ADP + phosphate + H(+). It catalyses the reaction D-methionine(out) + ATP + H2O = D-methionine(in) + ADP + phosphate + H(+). In terms of biological role, part of the ABC transporter complex MetNIQ involved in methionine import. Responsible for energy coupling to the transport system. This Staphylococcus epidermidis (strain ATCC 35984 / DSM 28319 / BCRC 17069 / CCUG 31568 / BM 3577 / RP62A) protein is Methionine import ATP-binding protein MetN 2.